Reading from the N-terminus, the 242-residue chain is Caffeoyl-CoA O-methyltransferase 2 (242 aa).

Lys16 is a substrate binding site. S-adenosyl-L-methionine-binding positions include Thr58, Glu80, 82-83 (GV), Ser88, Asp106, and Ala135. Asp158 is a substrate binding site. Asp158 provides a ligand contact to a divalent metal cation. Asp160 is a binding site for S-adenosyl-L-methionine. A divalent metal cation-binding residues include Asp184 and Asn185. Asn189 provides a ligand contact to substrate.

Belongs to the class I-like SAM-binding methyltransferase superfamily. Cation-dependent O-methyltransferase family. CCoAMT subfamily. Mg(2+) is required as a cofactor. As to expression, mostly expressed in the bottom and middle parts of the stems.

The enzyme catalyses (E)-caffeoyl-CoA + S-adenosyl-L-methionine = (E)-feruloyl-CoA + S-adenosyl-L-homocysteine + H(+). The protein operates within aromatic compound metabolism; phenylpropanoid biosynthesis. Methylates caffeoyl-CoA to feruloyl-CoA and 5-hydroxyferuloyl-CoA to sinapoyl-CoA. Plays a role in the synthesis of feruloylated polysaccharides. Involved in the reinforcement of the plant cell wall. Also involved in the responding to wounding or pathogen challenge by the increased formation of cell wall-bound ferulic acid polymers. Methylates 5-hydroxyferulolyl-CoA more efficiently than caffeoyl-CoA. In Nicotiana tabacum (Common tobacco), this protein is Caffeoyl-CoA O-methyltransferase 2 (CCOAOMT2).